A 337-amino-acid polypeptide reads, in one-letter code: D-alanine--D-alanine ligase (337 aa).

The ATP-grasp domain occupies lysine 126–serine 326. Valine 152–threonine 207 contributes to the ATP binding site. The Mg(2+) site is built by aspartate 279, glutamate 293, and asparagine 295.

Belongs to the D-alanine--D-alanine ligase family. The cofactor is Mg(2+). It depends on Mn(2+) as a cofactor.

It localises to the cytoplasm. It carries out the reaction 2 D-alanine + ATP = D-alanyl-D-alanine + ADP + phosphate + H(+). It functions in the pathway cell wall biogenesis; peptidoglycan biosynthesis. Cell wall formation. The chain is D-alanine--D-alanine ligase from Polynucleobacter asymbioticus (strain DSM 18221 / CIP 109841 / QLW-P1DMWA-1) (Polynucleobacter necessarius subsp. asymbioticus).